The sequence spans 77 residues: Cell division topological specificity factor (77 aa).

It belongs to the MinE family.

In terms of biological role, prevents the cell division inhibition by proteins MinC and MinD at internal division sites while permitting inhibition at polar sites. This ensures cell division at the proper site by restricting the formation of a division septum at the midpoint of the long axis of the cell. The chain is Cell division topological specificity factor from Helicobacter pylori (strain HPAG1).